Consider the following 222-residue polypeptide: 7-carboxy-7-deazaguanine synthase (222 aa).

Substrate is bound by residues 16–18 (LQG) and R31. Residues 22 to 222 (NLGRPAVFVR…IMAWGNARGK (201 aa)) form the Radical SAM core domain. Positions 35, 39, and 42 each coordinate [4Fe-4S] cluster. Residue T44 participates in Mg(2+) binding. Residue T77 participates in substrate binding. Residues G79 and 126–128 (SPK) contribute to the S-adenosyl-L-methionine site.

It belongs to the radical SAM superfamily. 7-carboxy-7-deazaguanine synthase family. Homodimer. Requires [4Fe-4S] cluster as cofactor. S-adenosyl-L-methionine is required as a cofactor. The cofactor is Mg(2+).

The enzyme catalyses 6-carboxy-5,6,7,8-tetrahydropterin + H(+) = 7-carboxy-7-deazaguanine + NH4(+). Its pathway is purine metabolism; 7-cyano-7-deazaguanine biosynthesis. Functionally, catalyzes the complex heterocyclic radical-mediated conversion of 6-carboxy-5,6,7,8-tetrahydropterin (CPH4) to 7-carboxy-7-deazaguanine (CDG), a step common to the biosynthetic pathways of all 7-deazapurine-containing compounds. The protein is 7-carboxy-7-deazaguanine synthase of Pyrobaculum aerophilum (strain ATCC 51768 / DSM 7523 / JCM 9630 / CIP 104966 / NBRC 100827 / IM2).